A 267-amino-acid chain; its full sequence is Probable membrane transporter protein MJ0441 (267 aa).

Helical transmembrane passes span 10 to 30 (LLLL…GSLF), 31 to 51 (GIGG…YFGI), 55 to 75 (VKFA…ISIF), 87 to 107 (ASIT…FLVV), 158 to 178 (FLSG…LAMA), 185 to 205 (AVAI…ISYL), and 213 to 233 (IYNI…PIIY).

The protein belongs to the 4-toluene sulfonate uptake permease (TSUP) (TC 2.A.102) family.

The protein resides in the cell membrane. The polypeptide is Probable membrane transporter protein MJ0441 (Methanocaldococcus jannaschii (strain ATCC 43067 / DSM 2661 / JAL-1 / JCM 10045 / NBRC 100440) (Methanococcus jannaschii)).